Here is a 99-residue protein sequence, read N- to C-terminus: NADH dehydrogenase [ubiquinone] 1 alpha subcomplex subunit 2 (99 aa).

The residue at position 2 (Ala-2) is an N-acetylalanine. Cys-24 and Cys-58 are oxidised to a cystine. At Lys-64 the chain carries N6-acetyllysine; alternate. Lys-64 carries the post-translational modification N6-succinyllysine; alternate.

It belongs to the complex I NDUFA2 subunit family. Complex I is composed of 45 different subunits.

The protein resides in the mitochondrion inner membrane. Functionally, accessory subunit of the mitochondrial membrane respiratory chain NADH dehydrogenase (Complex I), that is believed not to be involved in catalysis. Complex I functions in the transfer of electrons from NADH to the respiratory chain. The immediate electron acceptor for the enzyme is believed to be ubiquinone. This is NADH dehydrogenase [ubiquinone] 1 alpha subcomplex subunit 2 (NDUFA2) from Homo sapiens (Human).